The chain runs to 592 residues: Transmembrane 9 superfamily member 2 (592 aa).

Residues 1-24 (MRTPTTILLLVGAILFSGAGYVRS) form the signal peptide. Residues 25 to 229 (DASDHRYKEG…SLPHHLEIHW (205 aa)) are Lumenal-facing. A helical transmembrane segment spans residues 230 to 250 (FSIINSCVTVLLLTGFLATIL). The Cytoplasmic portion of the chain corresponds to 251–302 (MRVLKNDFMKYAQDEEAADDQEETGWKYIHGDVFRFPTHNSLFAASLGSGTQ). Residues 303–323 (LFTLTIFIFMLALVGVFYPYN) traverse the membrane as a helical segment. A topological domain (lumenal) is located at residue R324. Residues 325–345 (GALFTALVVIYALTSGIAGYT) traverse the membrane as a helical segment. At 346-362 (SASFYCQLEGKSWVRNL) the chain is on the cytoplasmic side. Residues 363 to 383 (LLTGCLFCGPLFLTFCFLNTV) traverse the membrane as a helical segment. The Lumenal portion of the chain corresponds to 384–397 (AITYTATAALPFGT). Residues 398 to 418 (IVVIVLIWTLVTSPLLVLGGI) traverse the membrane as a helical segment. At 419 to 452 (AGKNSKAEFQAPCRTTKYPREIPPLPWYRSAIPQ) the chain is on the cytoplasmic side. Residues 453-473 (MAMAGFLPFSAIYIELYYIFA) form a helical membrane-spanning segment. Residues 474-485 (SVWGHRIYTIYS) lie on the Lumenal side of the membrane. Residues 486–506 (ILFIVFIILIIVTAFITVALT) traverse the membrane as a helical segment. Topologically, residues 507–521 (YFQLAAEDHQWWWRS) are cytoplasmic. Residues 522–542 (FLCGGSTGLFIYAYCLYYYYA) form a helical membrane-spanning segment. The Lumenal segment spans residues 543-553 (RSDMSGFMQTS). A helical transmembrane segment spans residues 554-574 (FFFGYMACICYGFFLMLGTVG). The Cytoplasmic segment spans residues 575 to 592 (FRAALLFVRHIYRSIKCE). Positions 581-586 (FVRHIY) match the Endoplasmic reticulum export signal motif. The short motif at 590 to 592 (KCE) is the Golgi retention signal element.

Belongs to the nonaspanin (TM9SF) (TC 9.A.2) family.

It is found in the endosome membrane. The protein localises to the golgi apparatus membrane. This chain is Transmembrane 9 superfamily member 2, found in Arabidopsis thaliana (Mouse-ear cress).